A 336-amino-acid chain; its full sequence is uncharacterized protein (336 aa).

It belongs to the GppA/Ppx family.

This is an uncharacterized protein from Streptomyces coelicolor (strain ATCC BAA-471 / A3(2) / M145).